A 280-amino-acid chain; its full sequence is Putative pyruvate, phosphate dikinase regulatory protein (280 aa).

149-156 (GVSRSSKT) lines the ADP pocket.

This sequence belongs to the pyruvate, phosphate/water dikinase regulatory protein family. PDRP subfamily.

The catalysed reaction is N(tele)-phospho-L-histidyl/L-threonyl-[pyruvate, phosphate dikinase] + ADP = N(tele)-phospho-L-histidyl/O-phospho-L-threonyl-[pyruvate, phosphate dikinase] + AMP + H(+). The enzyme catalyses N(tele)-phospho-L-histidyl/O-phospho-L-threonyl-[pyruvate, phosphate dikinase] + phosphate + H(+) = N(tele)-phospho-L-histidyl/L-threonyl-[pyruvate, phosphate dikinase] + diphosphate. Functionally, bifunctional serine/threonine kinase and phosphorylase involved in the regulation of the pyruvate, phosphate dikinase (PPDK) by catalyzing its phosphorylation/dephosphorylation. The polypeptide is Putative pyruvate, phosphate dikinase regulatory protein (Novosphingobium aromaticivorans (strain ATCC 700278 / DSM 12444 / CCUG 56034 / CIP 105152 / NBRC 16084 / F199)).